Reading from the N-terminus, the 424-residue chain is Na(+)/H(+) antiporter NhaA (424 aa).

Helical transmembrane passes span 23 to 43, 65 to 85, 102 to 122, 131 to 151, 160 to 180, 183 to 203, 211 to 231, 265 to 285, 303 to 323, 341 to 361, and 373 to 393; these read ILLI…LATL, VHLW…GLEI, LPFI…MFFV, GWAI…ALLG, LFLV…IALF, AKIN…MFAC, LLVY…SGVH, ALHP…NAGV, IAAG…WLAV, AVSM…SLAF, and IGIL…LRLA.

The protein belongs to the NhaA Na(+)/H(+) (TC 2.A.33) antiporter family.

Its subcellular location is the cell inner membrane. The catalysed reaction is Na(+)(in) + 2 H(+)(out) = Na(+)(out) + 2 H(+)(in). Its function is as follows. Na(+)/H(+) antiporter that extrudes sodium in exchange for external protons. The protein is Na(+)/H(+) antiporter NhaA of Sphingopyxis alaskensis (strain DSM 13593 / LMG 18877 / RB2256) (Sphingomonas alaskensis).